The following is a 344-amino-acid chain: Arginine N-succinyltransferase (344 aa).

Leu125 contributes to the succinyl-CoA binding site. Catalysis depends on His229, which acts as the Proton donor.

This sequence belongs to the arginine N-succinyltransferase family.

It carries out the reaction succinyl-CoA + L-arginine = N(2)-succinyl-L-arginine + CoA + H(+). It functions in the pathway amino-acid degradation; L-arginine degradation via AST pathway; L-glutamate and succinate from L-arginine: step 1/5. Functionally, catalyzes the transfer of succinyl-CoA to arginine to produce N(2)-succinylarginine. The chain is Arginine N-succinyltransferase from Escherichia coli O17:K52:H18 (strain UMN026 / ExPEC).